The following is a 225-amino-acid chain: Cell division protein SepF (225 aa).

The segment at 21 to 134 (DEYLDEPEPT…GPLFDEGGPL (114 aa)) is disordered. Basic and acidic residues-rich tracts occupy residues 28–54 (EPTR…RDFA), 77–86 (RYESPRHSSR), and 115–127 (TRSD…RGPL).

It belongs to the SepF family. In terms of assembly, homodimer. Interacts with FtsZ.

Its subcellular location is the cytoplasm. In terms of biological role, cell division protein that is part of the divisome complex and is recruited early to the Z-ring. Probably stimulates Z-ring formation, perhaps through the cross-linking of FtsZ protofilaments. Its function overlaps with FtsA. The chain is Cell division protein SepF from Rhodococcus opacus (strain B4).